The sequence spans 872 residues: Alanine--tRNA ligase (872 aa).

Residues His567, His571, Cys669, and His673 each coordinate Zn(2+).

It belongs to the class-II aminoacyl-tRNA synthetase family. It depends on Zn(2+) as a cofactor.

The protein resides in the cytoplasm. The enzyme catalyses tRNA(Ala) + L-alanine + ATP = L-alanyl-tRNA(Ala) + AMP + diphosphate. Catalyzes the attachment of alanine to tRNA(Ala) in a two-step reaction: alanine is first activated by ATP to form Ala-AMP and then transferred to the acceptor end of tRNA(Ala). Also edits incorrectly charged Ser-tRNA(Ala) and Gly-tRNA(Ala) via its editing domain. This is Alanine--tRNA ligase from Streptococcus pyogenes serotype M6 (strain ATCC BAA-946 / MGAS10394).